The chain runs to 464 residues: NADH-ubiquinone oxidoreductase chain 4 (464 aa).

13 helical membrane-spanning segments follow: residues 18–38 (LLPT…VLPT), 54–74 (IADI…IANW), 79–99 (SLLY…NFMC), 102–122 (MLSF…LIGL), 131–151 (AADY…LAIG), 168–188 (VVLS…GIMV), 207–227 (PLAG…YAII), 239–259 (VLYT…TSII), 266–286 (LKVI…LGIL), 297–317 (LILS…VGGI), 332–352 (GLLT…FSNI), 375–395 (TILG…MLKV), and 420–440 (LLMI…NGII).

The protein belongs to the complex I subunit 4 family.

Its subcellular location is the mitochondrion membrane. It catalyses the reaction a ubiquinone + NADH + 5 H(+)(in) = a ubiquinol + NAD(+) + 4 H(+)(out). In terms of biological role, core subunit of the mitochondrial membrane respiratory chain NADH dehydrogenase (Complex I) that is believed to belong to the minimal assembly required for catalysis. Complex I functions in the transfer of electrons from NADH to the respiratory chain. The immediate electron acceptor for the enzyme is believed to be ubiquinone. In Candida albicans (strain SC5314 / ATCC MYA-2876) (Yeast), this protein is NADH-ubiquinone oxidoreductase chain 4 (NAD4).